The sequence spans 1341 residues: MVYSYTEKKRIRKDFGTRPQVLDIPYLLSIQLDSFEKFIEQDPEGQYGLEAAFRSVFPIQSYNGNSELQYVSYRLGEPVFDVKECQIRGVTYSKPLRVKLRLVIFDKDAPAGTVKDIKEQEVYMGEIPLMTENGTFVINGTERVIVSQLHRSPGVFFDSDKGKTHSSGKVLYNARIIPYRGSWLDFEFDPKDNLYVRIDRRRKLPASIILRALGKTSAEILDIFFEKVNFEVKDQTLMMELVPERLRGETATFDIEADGKVYVEKGRRVTARHIRQLEKDGVNFIEVPVEYIVGKVSAKDYVNEATGELIITANQEISLEALANLSQAGYKKLEVLFTNDLDHGPFMSETLRVDSTTDRISALVEIYRMMRPGEPPTKEAAESLFESLFFSAERYDLSTVGRMKFNSSIGREDAEEQGTLDEVDIIEVMKKLISIRNGKGEVDDIDHLGNRRIRSVGEMAENQFRVGLVRVERAVKERLSLGDLDNVMPQDLINAKPISAAVKEFFGSSQLSQFMDQNNPLSEVTHKRRISALGPGGLTRERAGFEVRDVHVTHYGRLCPIETPEGPNIGLINSLSAFARCNEYGFLETPYRRVVNGVVTDEVDYLSAIEEGQFVIAQANAKLTEEGGFADELVTARQKGESGLHPREHVDYMDVATNQVVSIAASLIPFLEHDDANRALMGANMQRQAVPTLRSEKPLVGTGIERNVAVDSGVTAVAKRGGVIQSVDASRIVVKVNEEELIPGEAGIDIYNLTKYTRSNQNTCINQRPCVMPGEPVARGDVLADGPSTDLGELALGQNMRIAFMPWNGYNFEDSILVSERVVQDDRFTTIHIQELSCVARDTKLGAEEITADIPNVGEAALSKLDESGIVYIGAEVKGGDILVGKVTPKGETQLTPEEKLLRAIFGEKASDVKDTSLRVPNSVAGTVIDVQVFTRDGVEKDKRALEIEQMQLKEAKKDLTEEFQILEGGLLARVRSVLLAGGYTEAKLGSIERKKWLEQTLENEELQNQLEQLAEQYDELKADFDKKFEAKRRKITQGDDLAPGVLKIVKVYLAVKRRIQPGDKMAGRHGNKGVISKINPVEDMPYDENGQPVDIVLNPLGVPSRMNIGQILEVHLGLAAKGIGDKINQMIKEQQELAKLREFLQKVYDLGDTRQRVDISELSDEDVRTLAHNLRAGLPVATPVFDGAPESSIKAMLELADLPASGQLTLFDGRTGDAFERPVTVGYMYMLKLNHLVDDKMHARSTGSYSLVTQQPLGGKAQFGGQRFGEMEVWALEAYGAAYTLQEMLTVKSDDVNGRTKMYKNIVDGNHAMEPGMPESFNVLLKEIRSLGINIELEDE.

Belongs to the RNA polymerase beta chain family. In terms of assembly, the RNAP catalytic core consists of 2 alpha, 1 beta, 1 beta' and 1 omega subunit. When a sigma factor is associated with the core the holoenzyme is formed, which can initiate transcription.

The catalysed reaction is RNA(n) + a ribonucleoside 5'-triphosphate = RNA(n+1) + diphosphate. Functionally, DNA-dependent RNA polymerase catalyzes the transcription of DNA into RNA using the four ribonucleoside triphosphates as substrates. In Vibrio cholerae serotype O1 (strain ATCC 39315 / El Tor Inaba N16961), this protein is DNA-directed RNA polymerase subunit beta.